The primary structure comprises 299 residues: MTTVNLAAYRFVSLDSIEQWRPLVAARCNTLGLRGTILLAPEGINLFIAGPREATDAFVDYIRHDPLFEGKFADLPFKESLSDSQPFRRMLVRLKREIITMKKPAIKPELGRAPSVDARTLKAWLDQGHDDAGRPVVMLDTRNAFEVDVGTFDRALDYRIDKFSEFPAVIEANRADLEGKTIVSFCTGGIRCEKAAIHMKDVGIENVYQLEGGILKYFEEVGGAHYHGDCFVFDYRTALNPQLAPTADVTCFACRAVVPADAQQSPLYVPGKCCPACHPGDSGTPGRRAEPGAEPARAV.

The Rhodanese domain occupies 132 to 226; the sequence is AGRPVVMLDT…YFEEVGGAHY (95 aa). The active-site Cysteine persulfide intermediate is C186.

This sequence belongs to the TrhO family.

The catalysed reaction is uridine(34) in tRNA + AH2 + O2 = 5-hydroxyuridine(34) in tRNA + A + H2O. Its function is as follows. Catalyzes oxygen-dependent 5-hydroxyuridine (ho5U) modification at position 34 in tRNAs. This is tRNA uridine(34) hydroxylase from Burkholderia mallei (strain NCTC 10247).